The following is a 137-amino-acid chain: Small ribosomal subunit protein uS19 (137 aa).

This sequence belongs to the universal ribosomal protein uS19 family.

Functionally, protein S19 forms a complex with S13 that binds strongly to the 16S ribosomal RNA. This is Small ribosomal subunit protein uS19 from Methanoculleus marisnigri (strain ATCC 35101 / DSM 1498 / JR1).